The primary structure comprises 297 residues: ATP synthase gamma chain (297 aa).

This sequence belongs to the ATPase gamma chain family. F-type ATPases have 2 components, CF(1) - the catalytic core - and CF(0) - the membrane proton channel. CF(1) has five subunits: alpha(3), beta(3), gamma(1), delta(1), epsilon(1). CF(0) has three main subunits: a, b and c.

It is found in the cell membrane. Produces ATP from ADP in the presence of a proton gradient across the membrane. The gamma chain is believed to be important in regulating ATPase activity and the flow of protons through the CF(0) complex. This is ATP synthase gamma chain from Arthrobacter sp. (strain FB24).